A 116-amino-acid polypeptide reads, in one-letter code: MINLIITLIINTALSTIIVLIAFWLPQLYLYLEKSSPYECGFDPLGSARLPFSMKFFLIAITFLLFDLEIALLLPLPWAMQLPTPNLTLILAYCLIILLTAGLAYEWIQKGLEWSE.

The next 3 helical transmembrane spans lie at 4–24 (LIIT…IAFW), 56–76 (FFLI…LLPL), and 88–108 (TLIL…YEWI).

It belongs to the complex I subunit 3 family. Core subunit of respiratory chain NADH dehydrogenase (Complex I) which is composed of 45 different subunits. Interacts with TMEM186. Interacts with TMEM242.

The protein resides in the mitochondrion inner membrane. The enzyme catalyses a ubiquinone + NADH + 5 H(+)(in) = a ubiquinol + NAD(+) + 4 H(+)(out). Functionally, core subunit of the mitochondrial membrane respiratory chain NADH dehydrogenase (Complex I) which catalyzes electron transfer from NADH through the respiratory chain, using ubiquinone as an electron acceptor. Essential for the catalytic activity of complex I. The sequence is that of NADH-ubiquinone oxidoreductase chain 3 from Osphranter robustus (Wallaroo).